A 229-amino-acid chain; its full sequence is Putative N-acetylmannosamine-6-phosphate 2-epimerase (229 aa).

This sequence belongs to the NanE family.

The enzyme catalyses an N-acyl-D-glucosamine 6-phosphate = an N-acyl-D-mannosamine 6-phosphate. The protein operates within amino-sugar metabolism; N-acetylneuraminate degradation; D-fructose 6-phosphate from N-acetylneuraminate: step 3/5. In terms of biological role, converts N-acetylmannosamine-6-phosphate (ManNAc-6-P) to N-acetylglucosamine-6-phosphate (GlcNAc-6-P). In Actinobacillus pleuropneumoniae serotype 5b (strain L20), this protein is Putative N-acetylmannosamine-6-phosphate 2-epimerase.